The primary structure comprises 327 residues: rRNA 2'-O-methyltransferase fibrillarin (327 aa).

A disordered region spans residues 1–93 (MKPGFSPRGG…RGNQSGKNVM (93 aa)). Residues 7 to 80 (PRGGGFGGRG…GGGRGRGGGR (74 aa)) are compositionally biased toward gly residues. 6 positions are modified to asymmetric dimethylarginine: Arg8, Arg15, Arg21, Arg24, Arg28, and Arg31. Glycyl lysine isopeptide (Lys-Gly) (interchain with G-Cter in SUMO2) cross-links involve residues Lys90, Lys108, and Lys115. Lys108 is modified (N6-acetyllysine). At Ser122 the chain carries Phosphoserine. An N6-acetyllysine modification is found at Lys127. Ser130 and Ser132 each carry phosphoserine. Glycyl lysine isopeptide (Lys-Gly) (interchain with G-Cter in SUMO2) cross-links involve residues Lys137, Lys149, and Lys164. S-adenosyl-L-methionine is bound by residues 178-179 (TT) and 197-198 (EF). N6-acetyllysine is present on residues Lys211 and Lys212. Residues 222–223 (DA) and 242–245 (DVAQ) contribute to the S-adenosyl-L-methionine site.

Belongs to the methyltransferase superfamily. Fibrillarin family. Component of box C/D small nucleolar ribonucleoprotein (snoRNP) particles that contain SNU13, FBL, NOP5 and NOP56, plus a guide RNA. It is associated with the U3, U8, U13, X and Y small nuclear RNAs. Component of several ribosomal and nucleolar protein complexes. Part of the small subunit (SSU) processome, composed of more than 70 proteins and the RNA chaperone small nucleolar RNA (snoRNA) U3. Interacts with PRMT5 and UTP20. Interacts with DDX5 and C1QBP. Interacts with NOL11. Interacts with PIH1D1. Interacts with RRP1B. Interacts with NOLC1. Interacts with SDE2. Interacts with NOP2 and NOP56. In terms of processing, ubiquitinated. Ubiquitination leads to proteasomal degradation. Deubiquitinated by USP36. By homology to other fibrillarins, some or all of the N-terminal domain arginines are modified to asymmetric dimethylarginine (DMA). Post-translationally, acetylated by CREBBP/CBP, preventing methylation of 'Gln-105' of histone H2A (H2AQ104me), without affecting rRNA methylation. Deacetylation by SIRT7 restores methylation of 'Gln-105' of histone H2A (H2AQ104me).

The protein localises to the nucleus. The protein resides in the nucleolus. It is found in the nucleoplasm. The catalysed reaction is L-glutaminyl-[histone H2A] + S-adenosyl-L-methionine = N(5)-methyl-L-glutaminyl-[histone H2A] + S-adenosyl-L-homocysteine + H(+). It catalyses the reaction a ribonucleotide in rRNA + S-adenosyl-L-methionine = a 2'-O-methylribonucleotide in rRNA + S-adenosyl-L-homocysteine + H(+). The enzyme catalyses a ribonucleotide in U6 snRNA + S-adenosyl-L-methionine = a 2'-O-methylribonucleotide in U6 snRNA + S-adenosyl-L-homocysteine + H(+). Functionally, S-adenosyl-L-methionine-dependent methyltransferase that has the ability to methylate both RNAs and proteins. Involved in pre-rRNA processing by catalyzing the site-specific 2'-hydroxyl methylation of ribose moieties in pre-ribosomal RNA. Site specificity is provided by a guide RNA that base pairs with the substrate. Methylation occurs at a characteristic distance from the sequence involved in base pairing with the guide RNA. Probably catalyzes 2'-O-methylation of U6 snRNAs in box C/D RNP complexes. U6 snRNA 2'-O-methylation is required for mRNA splicing fidelity. Also acts as a protein methyltransferase by mediating methylation of 'Gln-105' of histone H2A (H2AQ104me), a modification that impairs binding of the FACT complex and is specifically present at 35S ribosomal DNA locus. Part of the small subunit (SSU) processome, first precursor of the small eukaryotic ribosomal subunit. During the assembly of the SSU processome in the nucleolus, many ribosome biogenesis factors, an RNA chaperone and ribosomal proteins associate with the nascent pre-rRNA and work in concert to generate RNA folding, modifications, rearrangements and cleavage as well as targeted degradation of pre-ribosomal RNA by the RNA exosome. The sequence is that of rRNA 2'-O-methyltransferase fibrillarin (Fbl) from Rattus norvegicus (Rat).